Consider the following 372-residue polypeptide: Transaldolase 2 (372 aa).

K140 (schiff-base intermediate with substrate) is an active-site residue.

Belongs to the transaldolase family. Type 2 subfamily.

The protein localises to the cytoplasm. It carries out the reaction D-sedoheptulose 7-phosphate + D-glyceraldehyde 3-phosphate = D-erythrose 4-phosphate + beta-D-fructose 6-phosphate. The protein operates within carbohydrate degradation; pentose phosphate pathway; D-glyceraldehyde 3-phosphate and beta-D-fructose 6-phosphate from D-ribose 5-phosphate and D-xylulose 5-phosphate (non-oxidative stage): step 2/3. Functionally, transaldolase is important for the balance of metabolites in the pentose-phosphate pathway. The protein is Transaldolase 2 of Streptomyces coelicolor (strain ATCC BAA-471 / A3(2) / M145).